The chain runs to 463 residues: Rop guanine nucleotide exchange factor 4 (463 aa).

Disordered stretches follow at residues Met-1–Thr-25 and Gly-55–Asp-87. A compositionally biased stretch (acidic residues) spans Asp-59–Lys-68. Residues Asp-69–Asp-78 are compositionally biased toward basic and acidic residues. Residues Ser-84–Asp-463 enclose the PRONE domain.

Interacts with ARAC10/ROP11. Expressed in root vascular tissue and trichoblast cell files. Expressed in root metaxylem cell files. Expressed in guard cells of cotyledons, rosette leaves, sepals, petal, stigmas and siliques. Expressed in root metaxylem cell files.

It localises to the cytoplasm. The protein localises to the cell membrane. Its function is as follows. Guanine-nucleotide exchange factor (GEF) that acts as an activator of Rop (Rho of plants) GTPases by promoting the exchange of GDP for GTP. In association with ROPGEF1, acts as a specific regulator of ARAC10/ROP11 function in ABA-mediated stomatal closure. This Arabidopsis thaliana (Mouse-ear cress) protein is Rop guanine nucleotide exchange factor 4 (ROPGEF4).